Reading from the N-terminus, the 541-residue chain is Chaperonin GroEL (541 aa).

ATP contacts are provided by residues 29–32, 86–90, glycine 413, 477–479, and aspartate 493; these read TLGP, DGTTT, and DAL.

This sequence belongs to the chaperonin (HSP60) family. As to quaternary structure, forms a cylinder of 14 subunits composed of two heptameric rings stacked back-to-back. Interacts with the co-chaperonin GroES.

Its subcellular location is the cytoplasm. It carries out the reaction ATP + H2O + a folded polypeptide = ADP + phosphate + an unfolded polypeptide.. In terms of biological role, together with its co-chaperonin GroES, plays an essential role in assisting protein folding. The GroEL-GroES system forms a nano-cage that allows encapsulation of the non-native substrate proteins and provides a physical environment optimized to promote and accelerate protein folding. The sequence is that of Chaperonin GroEL from Clostridium beijerinckii (strain ATCC 51743 / NCIMB 8052) (Clostridium acetobutylicum).